Here is a 23-residue protein sequence, read N- to C-terminus: PAKQVAFAEHAREKMLRGVNVLA.

It belongs to the chaperonin (HSP60) family. In terms of assembly, forms a cylinder of 14 subunits composed of two heptameric rings stacked back-to-back. Interacts with the co-chaperonin GroES. In terms of processing, phosphorylated on threonine.

The protein resides in the cytoplasm. The catalysed reaction is ATP + H2O + a folded polypeptide = ADP + phosphate + an unfolded polypeptide.. Together with its co-chaperonin GroES, plays an essential role in assisting protein folding. The GroEL-GroES system forms a nano-cage that allows encapsulation of the non-native substrate proteins and provides a physical environment optimized to promote and accelerate protein folding. In Acidithiobacillus ferrooxidans (Thiobacillus ferrooxidans), this protein is Chaperonin GroEL.